The sequence spans 426 residues: Dihydroorotase (426 aa).

Residues His58 and His60 each contribute to the Zn(2+) site. Residues 60–62 (HLR) and Asn92 contribute to the substrate site. Residues Asp150, His177, and His230 each coordinate Zn(2+). Asn276 lines the substrate pocket. Asp303 contributes to the Zn(2+) binding site. Asp303 is an active-site residue. Substrate-binding positions include His307 and 321–322 (FG).

Belongs to the metallo-dependent hydrolases superfamily. DHOase family. Class I DHOase subfamily. It depends on Zn(2+) as a cofactor.

It catalyses the reaction (S)-dihydroorotate + H2O = N-carbamoyl-L-aspartate + H(+). It participates in pyrimidine metabolism; UMP biosynthesis via de novo pathway; (S)-dihydroorotate from bicarbonate: step 3/3. Functionally, catalyzes the reversible cyclization of carbamoyl aspartate to dihydroorotate. The chain is Dihydroorotase from Listeria welshimeri serovar 6b (strain ATCC 35897 / DSM 20650 / CCUG 15529 / CIP 8149 / NCTC 11857 / SLCC 5334 / V8).